Reading from the N-terminus, the 339-residue chain is NADH-quinone oxidoreductase subunit H (339 aa).

The next 9 helical transmembrane spans lie at 9 to 29, 50 to 70, 82 to 102, 115 to 135, 161 to 181, 187 to 207, 235 to 255, 275 to 295, and 311 to 331; these read IFPL…LILC, PNVV…KLLF, ILFI…WAVI, VGVL…IIAG, MGLV…SEII, MPWW…ISVL, MGFA…SAMT, IPGF…FLWI, and GWKV…SVLV.

This sequence belongs to the complex I subunit 1 family. As to quaternary structure, NDH-1 is composed of 14 different subunits. Subunits NuoA, H, J, K, L, M, N constitute the membrane sector of the complex.

The protein resides in the cell membrane. The catalysed reaction is a quinone + NADH + 5 H(+)(in) = a quinol + NAD(+) + 4 H(+)(out). In terms of biological role, NDH-1 shuttles electrons from NADH, via FMN and iron-sulfur (Fe-S) centers, to quinones in the respiratory chain. The immediate electron acceptor for the enzyme in this species is believed to be ubiquinone. Couples the redox reaction to proton translocation (for every two electrons transferred, four hydrogen ions are translocated across the cytoplasmic membrane), and thus conserves the redox energy in a proton gradient. This subunit may bind ubiquinone. The polypeptide is NADH-quinone oxidoreductase subunit H (Rickettsia africae (strain ESF-5)).